We begin with the raw amino-acid sequence, 126 residues long: Large ribosomal subunit protein uL22 (126 aa).

The protein belongs to the universal ribosomal protein uL22 family. In terms of assembly, part of the 50S ribosomal subunit.

Its function is as follows. This protein binds specifically to 23S rRNA; its binding is stimulated by other ribosomal proteins, e.g. L4, L17, and L20. It is important during the early stages of 50S assembly. It makes multiple contacts with different domains of the 23S rRNA in the assembled 50S subunit and ribosome. The globular domain of the protein is located near the polypeptide exit tunnel on the outside of the subunit, while an extended beta-hairpin is found that lines the wall of the exit tunnel in the center of the 70S ribosome. This chain is Large ribosomal subunit protein uL22, found in Dinoroseobacter shibae (strain DSM 16493 / NCIMB 14021 / DFL 12).